A 235-amino-acid chain; its full sequence is UPF0758 protein COPRO5265_1522 (235 aa).

Positions 109 to 235 constitute an MPN domain; that stretch reads RITTPEDAIE…HVSLAREKLI (127 aa). Residues histidine 184, histidine 186, and aspartate 197 each contribute to the Zn(2+) site. A JAMM motif motif is present at residues 184–197; that stretch reads HNHPSGDPSPSRED.

It belongs to the UPF0758 family.

The polypeptide is UPF0758 protein COPRO5265_1522 (Coprothermobacter proteolyticus (strain ATCC 35245 / DSM 5265 / OCM 4 / BT)).